Here is a 1013-residue protein sequence, read N- to C-terminus: 2-oxoglutarate dehydrogenase, mitochondrial (1013 aa).

A mitochondrion-targeting transit peptide spans 1 to 39 (MFTLKQVINKSIQTSMKNGVMSSAVKRSFSTVGGINQPK). Thiamine diphosphate contacts are provided by R302, D403, N436, I438, and Q664. Residues D403, N436, and I438 each contribute to the Mg(2+) site.

It belongs to the alpha-ketoglutarate dehydrogenase family. In terms of assembly, homodimer. Component of the 2-oxoglutarate dehydrogenase complex. It depends on thiamine diphosphate as a cofactor. Mg(2+) is required as a cofactor.

The protein localises to the mitochondrion matrix. It catalyses the reaction N(6)-[(R)-lipoyl]-L-lysyl-[protein] + 2-oxoglutarate + H(+) = N(6)-[(R)-S(8)-succinyldihydrolipoyl]-L-lysyl-[protein] + CO2. Functionally, the 2-oxoglutarate dehydrogenase complex catalyzes the overall conversion of 2-oxoglutarate to succinyl-CoA and CO(2). It contains multiple copies of three enzymatic components: 2-oxoglutarate dehydrogenase (E1), dihydrolipoamide succinyltransferase (E2) and lipoamide dehydrogenase (E3). This is 2-oxoglutarate dehydrogenase, mitochondrial (ogdh) from Dictyostelium discoideum (Social amoeba).